Reading from the N-terminus, the 58-residue chain is MAVPKKKTSKGKRNQRHAIWKAKAATAAQRALSIGKSVLSGRAQGFVYPMQESDDDES.

Belongs to the bacterial ribosomal protein bL32 family.

This Prochlorococcus marinus (strain MIT 9303) protein is Large ribosomal subunit protein bL32.